The following is a 161-amino-acid chain: Cyclic pyranopterin monophosphate synthase (161 aa).

Substrate is bound by residues leucine 73–histidine 75 and methionine 110–glutamate 111. Aspartate 125 is a catalytic residue.

Belongs to the MoaC family. In terms of assembly, homohexamer; trimer of dimers.

The enzyme catalyses (8S)-3',8-cyclo-7,8-dihydroguanosine 5'-triphosphate = cyclic pyranopterin phosphate + diphosphate. The protein operates within cofactor biosynthesis; molybdopterin biosynthesis. Catalyzes the conversion of (8S)-3',8-cyclo-7,8-dihydroguanosine 5'-triphosphate to cyclic pyranopterin monophosphate (cPMP). The chain is Cyclic pyranopterin monophosphate synthase from Pseudomonas savastanoi pv. phaseolicola (strain 1448A / Race 6) (Pseudomonas syringae pv. phaseolicola (strain 1448A / Race 6)).